The sequence spans 125 residues: Small ribosomal subunit protein uS12 (125 aa).

The disordered stretch occupies residues arginine 9–arginine 31. At aspartate 89 the chain carries 3-methylthioaspartic acid. Residues glycine 106–alanine 125 are disordered. A compositionally biased stretch (basic residues) spans serine 113–alanine 125.

The protein belongs to the universal ribosomal protein uS12 family. In terms of assembly, part of the 30S ribosomal subunit. Contacts proteins S8 and S17. May interact with IF1 in the 30S initiation complex.

Functionally, with S4 and S5 plays an important role in translational accuracy. Its function is as follows. Interacts with and stabilizes bases of the 16S rRNA that are involved in tRNA selection in the A site and with the mRNA backbone. Located at the interface of the 30S and 50S subunits, it traverses the body of the 30S subunit contacting proteins on the other side and probably holding the rRNA structure together. The combined cluster of proteins S8, S12 and S17 appears to hold together the shoulder and platform of the 30S subunit. The chain is Small ribosomal subunit protein uS12 from Polaromonas sp. (strain JS666 / ATCC BAA-500).